The sequence spans 749 residues: Homeobox-leucine zipper protein ROC7 (749 aa).

Residues 26 to 98 (LDQHQQHQHQ…KKRYHRHTQH (73 aa)) form a disordered region. Residues 46-57 (SDGRAPRDELEM) are compositionally biased toward basic and acidic residues. Residues 68 to 79 (SGGGGGGGGSGG) show a composition bias toward gly residues. Residues 86 to 97 (RPRKKRYHRHTQ) are compositionally biased toward basic residues. Positions 88–147 (RKKRYHRHTQHQIQELEAFFKECPHPDDKQRKELSRELGLEPLQVKFWFQNKRTQMKTQH) form a DNA-binding region, homeobox. A coiled-coil region spans residues 137–218 (QNKRTQMKTQ…DRISAIAAKY (82 aa)). Residues 256-494 (ADFDKPLVIE…LERQCERLAS (239 aa)) enclose the START domain.

Belongs to the HD-ZIP homeobox family. Class IV subfamily.

The protein localises to the nucleus. Functionally, probable transcription factor. The polypeptide is Homeobox-leucine zipper protein ROC7 (ROC7) (Oryza sativa subsp. japonica (Rice)).